The chain runs to 510 residues: MALTLSFSLPLPSLHQKIPSKYSTFRPIIVSLSDKSTIEITQPIKLSTRTIPGDYGLPGIGPWKDRLDYFYNQGKNDFFESRIAKYKSTIFRTNMPPGPFITSNPKVIVLLDGKSFPVLFDASKVEKKDLFTGTFVPSTELTGGYRILSYLDPSEPNHEKLKKLMFFLLSSRRDHVIPEFHETYTELFETLDKEMEEKGTVGFNSGSDQAAFNFLARSLFGVNPVETKLGTDGPALIGKWILLQLHPVITLGLPKFLDDVLLHTFRLPPILVKKDYQRLYDFFYTNSANLFIEAEKLGISKDEACHNLLFATCFNSFGGMKIFFPNMLKSIAKAGVEIHTRLANEIRSEVKSAGGKITMSAMEKMPLMKSVVYEALRVDPPVASQYGRAKQDLKIESHDAVFEVKKGEILFGYQPFATKDPKIFDRPGEFVADRFVGEEGEKLLKHVLWSNGPETESPTVGNKQCAGKDFVVMVSRLFVTEFFLRYGTLNVDVGTSALGSSITITSLKKA.

Residues 1 to 31 constitute a chloroplast transit peptide; it reads MALTLSFSLPLPSLHQKIPSKYSTFRPIIVS. Heme b-binding residues include K127, H158, and K162. Residues N315 and K321 each contribute to the (13S)-hydroperoxy-(9Z,11E)-octadecadienoate site. Residue N315 participates in (13S)-hydroperoxy-(9Z,11E,15Z)-octadecatrienoate binding. Positions 463 and 465 each coordinate heme b.

Belongs to the cytochrome P450 family. Heme b is required as a cofactor. In terms of tissue distribution, expressed in flower buds, leaves, roots, stems, petioles and cotyledons. Not detected in ripe fruits. Expressed in sieve elements.

The protein localises to the plastid. It is found in the chloroplast inner membrane. It carries out the reaction (13S)-hydroperoxy-(9Z,11E,15Z)-octadecatrienoate = (9Z,13S,15Z)-12,13-epoxyoctadeca-9,11,15-trienoate + H2O. The catalysed reaction is (13S)-hydroperoxy-(9Z,11E)-octadecadienoate = (9Z,13S)-12,13-epoxyoctadeca-9,11-dienoate + H2O. Cytochrome P450 of the CYP74A subfamily involved in the biosynthesis of jasmonic acid from lipoxygenase-derived hydroperoxides of free fatty acids. Catalyzes the synthesis of unstable allene oxide, which is further converted spontaneously by hydrolysis or cyclization. Metabolizes 13- but not 9-hydroperoxides of linoleic and linolenic acids. Can use 15S-hydroperoxy-11(Z),13(E),17(Z)-eicosatrienoic acid (15-HPET) and 13S-hydroperoxy-9(Z),11(E),15(Z)-octadecatrienoic acid (13-HPOT) as substrates, but only 50% activity with 13S-hydroperoxy-9(Z),11(E)-octadecadienoic acid (13-HPOD). The sequence is that of Allene oxide synthase 2, chloroplastic from Solanum lycopersicum (Tomato).